The sequence spans 121 residues: Small ribosomal subunit protein eS24 (121 aa).

Belongs to the eukaryotic ribosomal protein eS24 family.

The polypeptide is Small ribosomal subunit protein eS24 (Pyrobaculum aerophilum (strain ATCC 51768 / DSM 7523 / JCM 9630 / CIP 104966 / NBRC 100827 / IM2)).